The following is a 518-amino-acid chain: MVKTVDFSGRPFHFIGIGGIGMSALAYVLAKRQLPVSGSDLRSTHITERLQGVGAHIFSRQEATNLELFNSSPERVLETVSVAVNGTQPSYPNGNGKTFSDSPSLLLQETLPQVICSTAIAHNNSEYAAAKEKGCPIFHRSDVLAALIRDYQSIAVAGTHGKTTTSSLIGYMLLKADLDPTIIVGGEVDAWEGNARIGAKGGYLVAEADESDGSLTKHYPNIGIVTNIELDHPDHYQTLDDVVKTFQIFETQCDLLIGCLDCETVASELTPAITYSLDPSKGADYTVQNVTSNHKGTFAEVWERGNYLGEIRLTIPGSHNLSNALAAIAVGRKLGLNFAVIADALFTFAGAKRRFEQRGQCNGITFIDDYAHHPSEIEATLSAARSKVDGETISRVVAIFQPHRYSRTATFLKEFATCFKDADLVILTDIYSAGEVNLHNISGQDLAEAVENNHSQVIYEPSLKGLPQVIPDLIKPGDLVLFLGAGNLNQIIPEMINTYHTASTQSTANAMVETSINC.

An ATP-binding site is contributed by 158–164 (GTHGKTT).

This sequence belongs to the MurCDEF family.

Its subcellular location is the cytoplasm. The enzyme catalyses UDP-N-acetyl-alpha-D-muramate + L-alanine + ATP = UDP-N-acetyl-alpha-D-muramoyl-L-alanine + ADP + phosphate + H(+). It functions in the pathway cell wall biogenesis; peptidoglycan biosynthesis. Its function is as follows. Cell wall formation. This Crocosphaera subtropica (strain ATCC 51142 / BH68) (Cyanothece sp. (strain ATCC 51142)) protein is UDP-N-acetylmuramate--L-alanine ligase.